The following is a 178-amino-acid chain: Probable chorismate pyruvate-lyase (178 aa).

Residues Met-37, Arg-78, Leu-114, and Glu-165 each coordinate substrate.

Belongs to the UbiC family.

The protein resides in the cytoplasm. The catalysed reaction is chorismate = 4-hydroxybenzoate + pyruvate. It functions in the pathway cofactor biosynthesis; ubiquinone biosynthesis. Functionally, removes the pyruvyl group from chorismate, with concomitant aromatization of the ring, to provide 4-hydroxybenzoate (4HB) for the ubiquinone pathway. In Aeromonas hydrophila subsp. hydrophila (strain ATCC 7966 / DSM 30187 / BCRC 13018 / CCUG 14551 / JCM 1027 / KCTC 2358 / NCIMB 9240 / NCTC 8049), this protein is Probable chorismate pyruvate-lyase.